Consider the following 476-residue polypeptide: Bifunctional protein HldE (476 aa).

The segment at 1–318 (MKPVLPDYSK…AEAVHGSKDT (318 aa)) is ribokinase. 195–198 (NMSE) is a binding site for ATP. D264 is an active-site residue. Positions 344–476 (MTNGCFDILH…IIEAIKGGRG (133 aa)) are cytidylyltransferase.

It in the N-terminal section; belongs to the carbohydrate kinase PfkB family. This sequence in the C-terminal section; belongs to the cytidylyltransferase family. As to quaternary structure, homodimer.

It carries out the reaction D-glycero-beta-D-manno-heptose 7-phosphate + ATP = D-glycero-beta-D-manno-heptose 1,7-bisphosphate + ADP + H(+). The enzyme catalyses D-glycero-beta-D-manno-heptose 1-phosphate + ATP + H(+) = ADP-D-glycero-beta-D-manno-heptose + diphosphate. Its pathway is nucleotide-sugar biosynthesis; ADP-L-glycero-beta-D-manno-heptose biosynthesis; ADP-L-glycero-beta-D-manno-heptose from D-glycero-beta-D-manno-heptose 7-phosphate: step 1/4. It participates in nucleotide-sugar biosynthesis; ADP-L-glycero-beta-D-manno-heptose biosynthesis; ADP-L-glycero-beta-D-manno-heptose from D-glycero-beta-D-manno-heptose 7-phosphate: step 3/4. In terms of biological role, catalyzes the phosphorylation of D-glycero-D-manno-heptose 7-phosphate at the C-1 position to selectively form D-glycero-beta-D-manno-heptose-1,7-bisphosphate. Functionally, catalyzes the ADP transfer from ATP to D-glycero-beta-D-manno-heptose 1-phosphate, yielding ADP-D-glycero-beta-D-manno-heptose. This is Bifunctional protein HldE from Vibrio cholerae serotype O1 (strain ATCC 39541 / Classical Ogawa 395 / O395).